Consider the following 298-residue polypeptide: MPEGKIIKALSGFYYVLDESQESGKVVQCRARGIFRKNKITPLVGDYVVYQADNDKEGYLLEVKERTNELVRPPISNVDQAVLVFSAAEPTFSTSLLDRFLVLVEANHIEPIICITKMDLLKTDEERETIMAYADDYRQIGYEVHLTSTIEGDGIEKLTPHFHNKITVFAGQSGVGKSSLLNAMSPELALKTDDISSHLGRGKHTTRHVELIRTANGLIADTPGFSSLEFTGIEAEDLGLYFLDIRDRSGDCKFRGCLHVKEPGCAIKDAVEHDQIKEYRYQHYLEFLTEIKDRKPRY.

Residues 67–228 (TNELVRPPIS…IADTPGFSSL (162 aa)) form the CP-type G domain. GTP contacts are provided by residues 116-119 (TKMD) and 171-179 (GQSGVGKSS). Residues cysteine 252, cysteine 257, histidine 259, and cysteine 265 each coordinate Zn(2+).

This sequence belongs to the TRAFAC class YlqF/YawG GTPase family. RsgA subfamily. As to quaternary structure, monomer. Associates with 30S ribosomal subunit, binds 16S rRNA. It depends on Zn(2+) as a cofactor.

The protein resides in the cytoplasm. In terms of biological role, one of several proteins that assist in the late maturation steps of the functional core of the 30S ribosomal subunit. Helps release RbfA from mature subunits. May play a role in the assembly of ribosomal proteins into the subunit. Circularly permuted GTPase that catalyzes slow GTP hydrolysis, GTPase activity is stimulated by the 30S ribosomal subunit. The chain is Small ribosomal subunit biogenesis GTPase RsgA from Bacillus pumilus (strain SAFR-032).